We begin with the raw amino-acid sequence, 953 residues long: Translation initiation factor IF-2 (953 aa).

2 disordered regions span residues 52 to 241 (KASK…QQEA) and 279 to 363 (TKLK…TERK). 3 stretches are compositionally biased toward basic and acidic residues: residues 80 to 89 (TGSEHVEKTQ), 98 to 111 (FKAEREARAKEQAA), and 140 to 188 (QGDK…ENHK). Residues 191 to 207 (RFTNQKKQGRQEPQSKS) show a composition bias toward polar residues. The span at 229–241 (RQSETRFRAQQEA) shows a compositional bias: basic and acidic residues. A compositionally biased stretch (polar residues) spans 282-291 (KSSNISAKST). Over residues 300–317 (ARPEKNRELTHHSQEGQK) the composition is skewed to basic and acidic residues. Residues 322–338 (SWNSQNQVRNQKNSNWN) are compositionally biased toward low complexity. Positions 339–348 (KNKKTKKGKN) are enriched in basic residues. In terms of domain architecture, tr-type G spans 454–623 (ERAPVVTIMG…LLVAEVEELK (170 aa)). The tract at residues 463–470 (GHVDHGKT) is G1. 463 to 470 (GHVDHGKT) contributes to the GTP binding site. Positions 488 to 492 (GITQH) are G2. Positions 509-512 (DTPG) are G3. Residues 509–513 (DTPGH) and 563–566 (NKID) each bind GTP. The tract at residues 563–566 (NKID) is G4. The tract at residues 599–601 (SAK) is G5.

Belongs to the TRAFAC class translation factor GTPase superfamily. Classic translation factor GTPase family. IF-2 subfamily.

Its subcellular location is the cytoplasm. In terms of biological role, one of the essential components for the initiation of protein synthesis. Protects formylmethionyl-tRNA from spontaneous hydrolysis and promotes its binding to the 30S ribosomal subunits. Also involved in the hydrolysis of GTP during the formation of the 70S ribosomal complex. The sequence is that of Translation initiation factor IF-2 from Streptococcus pyogenes serotype M4 (strain MGAS10750).